The primary structure comprises 316 residues: N-acetyl-gamma-glutamyl-phosphate reductase (316 aa).

Residue cysteine 136 is part of the active site.

Belongs to the NAGSA dehydrogenase family. Type 1 subfamily.

Its subcellular location is the cytoplasm. The catalysed reaction is N-acetyl-L-glutamate 5-semialdehyde + phosphate + NADP(+) = N-acetyl-L-glutamyl 5-phosphate + NADPH + H(+). It functions in the pathway amino-acid biosynthesis; L-arginine biosynthesis; N(2)-acetyl-L-ornithine from L-glutamate: step 3/4. In terms of biological role, catalyzes the NADPH-dependent reduction of N-acetyl-5-glutamyl phosphate to yield N-acetyl-L-glutamate 5-semialdehyde. This chain is N-acetyl-gamma-glutamyl-phosphate reductase, found in Xanthomonas campestris pv. campestris (strain 8004).